The following is a 288-amino-acid chain: Diaminopimelate epimerase (288 aa).

Substrate is bound by residues Asn-14 and Asn-67. Cys-76 (proton donor) is an active-site residue. Residues 77-78 (GN), Asn-166, Asn-199, and 217-218 (ER) contribute to the substrate site. The active-site Proton acceptor is Cys-226. 227 to 228 (GT) is a binding site for substrate.

Belongs to the diaminopimelate epimerase family. As to quaternary structure, homodimer.

The protein resides in the cytoplasm. It carries out the reaction (2S,6S)-2,6-diaminopimelate = meso-2,6-diaminopimelate. The protein operates within amino-acid biosynthesis; L-lysine biosynthesis via DAP pathway; DL-2,6-diaminopimelate from LL-2,6-diaminopimelate: step 1/1. In terms of biological role, catalyzes the stereoinversion of LL-2,6-diaminopimelate (L,L-DAP) to meso-diaminopimelate (meso-DAP), a precursor of L-lysine and an essential component of the bacterial peptidoglycan. The protein is Diaminopimelate epimerase of Bacillus cereus (strain ATCC 10987 / NRS 248).